A 114-amino-acid chain; its full sequence is MGIRLLCRVAFCFLAVGLVDVKVTQSSRYLVKRTGEKVFLECVQDMDHENMFWYRQDPGLGLRLIYFSYDVKMKEKGDIPEGYSVSREKKERFSLILESASTNQTSMYLCASSL.

The first 26 residues, 1-26 (MGIRLLCRVAFCFLAVGLVDVKVTQS), serve as a signal peptide directing secretion. The Ig-like domain occupies 27 to 114 (SRYLVKRTGE…TSMYLCASSL (88 aa)). C42 and C110 form a disulfide bridge. An N-linked (GlcNAc...) asparagine glycan is attached at N103.

In terms of assembly, alpha-beta TR is a heterodimer composed of an alpha and beta chain; disulfide-linked. The alpha-beta TR is associated with the transmembrane signaling CD3 coreceptor proteins to form the TR-CD3 (TcR or TCR). The assembly of alpha-beta TR heterodimers with CD3 occurs in the endoplasmic reticulum where a single alpha-beta TR heterodimer associates with one CD3D-CD3E heterodimer, one CD3G-CD3E heterodimer and one CD247 homodimer forming a stable octameric structure. CD3D-CD3E and CD3G-CD3E heterodimers preferentially associate with TR alpha and TR beta chains, respectively. The association of the CD247 homodimer is the last step of TcR assembly in the endoplasmic reticulum and is required for transport to the cell surface.

The protein resides in the cell membrane. Functionally, v region of the variable domain of T cell receptor (TR) beta chain that participates in the antigen recognition. Alpha-beta T cell receptors are antigen specific receptors which are essential to the immune response and are present on the cell surface of T lymphocytes. Recognize peptide-major histocompatibility (MH) (pMH) complexes that are displayed by antigen presenting cells (APC), a prerequisite for efficient T cell adaptive immunity against pathogens. Binding of alpha-beta TR to pMH complex initiates TR-CD3 clustering on the cell surface and intracellular activation of LCK that phosphorylates the ITAM motifs of CD3G, CD3D, CD3E and CD247 enabling the recruitment of ZAP70. In turn ZAP70 phosphorylates LAT, which recruits numerous signaling molecules to form the LAT signalosome. The LAT signalosome propagates signal branching to three major signaling pathways, the calcium, the mitogen-activated protein kinase (MAPK) kinase and the nuclear factor NF-kappa-B (NF-kB) pathways, leading to the mobilization of transcription factors that are critical for gene expression and essential for T cell growth and differentiation. The T cell repertoire is generated in the thymus, by V-(D)-J rearrangement. This repertoire is then shaped by intrathymic selection events to generate a peripheral T cell pool of self-MH restricted, non-autoaggressive T cells. Post-thymic interaction of alpha-beta TR with the pMH complexes shapes TR structural and functional avidity. In Homo sapiens (Human), this protein is T cell receptor beta variable 28.